A 78-amino-acid chain; its full sequence is Acyl carrier protein (78 aa).

In terms of domain architecture, Carrier spans 2-77 (SDSAEKVKKI…DAIDYIEANK (76 aa)). Residue S37 is modified to O-(pantetheine 4'-phosphoryl)serine.

It belongs to the acyl carrier protein (ACP) family. In terms of processing, 4'-phosphopantetheine is transferred from CoA to a specific serine of apo-ACP by AcpS. This modification is essential for activity because fatty acids are bound in thioester linkage to the sulfhydryl of the prosthetic group.

The protein localises to the cytoplasm. It participates in lipid metabolism; fatty acid biosynthesis. In terms of biological role, carrier of the growing fatty acid chain in fatty acid biosynthesis. The protein is Acyl carrier protein of Sphingopyxis alaskensis (strain DSM 13593 / LMG 18877 / RB2256) (Sphingomonas alaskensis).